The primary structure comprises 292 residues: Glutamate racemase (292 aa).

Residues 10-11 and 42-43 each bind substrate; these read DS and YG. The Proton donor/acceptor role is filled by cysteine 73. 74-75 contacts substrate; it reads NS. The active-site Proton donor/acceptor is cysteine 186. 187-188 provides a ligand contact to substrate; it reads TH.

It belongs to the aspartate/glutamate racemases family.

The enzyme catalyses L-glutamate = D-glutamate. It participates in cell wall biogenesis; peptidoglycan biosynthesis. Functionally, provides the (R)-glutamate required for cell wall biosynthesis. The polypeptide is Glutamate racemase (Beutenbergia cavernae (strain ATCC BAA-8 / DSM 12333 / CCUG 43141 / JCM 11478 / NBRC 16432 / NCIMB 13614 / HKI 0122)).